The chain runs to 328 residues: NADH-cytochrome b5 reductase-like protein (328 aa).

The 109-residue stretch at 76 to 184 (DKWLEFKLQD…KGPVEKFKYS (109 aa)) folds into the FAD-binding FR-type domain. Phosphothreonine is present on T201.

It belongs to the flavoprotein pyridine nucleotide cytochrome reductase family. FAD serves as cofactor.

The protein localises to the mitochondrion. It catalyses the reaction 2 Fe(III)-[cytochrome b5] + NADH = 2 Fe(II)-[cytochrome b5] + NAD(+) + H(+). Functionally, desaturation and elongation of fatty acids. The sequence is that of NADH-cytochrome b5 reductase-like protein (CBR2) from Arabidopsis thaliana (Mouse-ear cress).